A 513-amino-acid chain; its full sequence is GMP synthase [glutamine-hydrolyzing] (513 aa).

The 198-residue stretch at S3–D200 folds into the Glutamine amidotransferase type-1 domain. Residue C80 is the Nucleophile of the active site. Catalysis depends on residues H174 and E176. The GMPS ATP-PPase domain occupies W201–R388. Position 228-234 (S228–S234) interacts with ATP.

Homodimer.

The enzyme catalyses XMP + L-glutamine + ATP + H2O = GMP + L-glutamate + AMP + diphosphate + 2 H(+). It functions in the pathway purine metabolism; GMP biosynthesis; GMP from XMP (L-Gln route): step 1/1. In terms of biological role, catalyzes the synthesis of GMP from XMP. This is GMP synthase [glutamine-hydrolyzing] from Chlorobium limicola (strain DSM 245 / NBRC 103803 / 6330).